The chain runs to 214 residues: uncharacterized protein (214 aa).

Residues M1–G18 form the signal peptide. N-linked (GlcNAc...) asparagine; by host glycosylation is present at N64.

This is an uncharacterized protein from Magallana gigas (Pacific oyster).